An 854-amino-acid chain; its full sequence is Glucans biosynthesis glucosyltransferase H (854 aa).

The next 7 membrane-spanning stretches (helical) occupy residues 155 to 175, 209 to 229, 528 to 548, 583 to 603, 619 to 639, 671 to 691, and 695 to 715; these read ILLA…KTIL, ILVL…TALM, VFLT…FLVL, IALF…SVIL, FLSL…RMLF, FVRH…MAWL, and FLWW…VSVY.

It belongs to the glycosyltransferase 2 family. OpgH subfamily.

It is found in the cell inner membrane. It functions in the pathway glycan metabolism; osmoregulated periplasmic glucan (OPG) biosynthesis. Involved in the biosynthesis of osmoregulated periplasmic glucans (OPGs). The protein is Glucans biosynthesis glucosyltransferase H of Pectobacterium atrosepticum (strain SCRI 1043 / ATCC BAA-672) (Erwinia carotovora subsp. atroseptica).